The sequence spans 507 residues: Alkyl hydroperoxide reductase subunit F (507 aa).

Position 207-222 (207-222 (DVLIVGGGPASGSAAI)) interacts with FAD. Cys335 and Cys338 form a disulfide bridge. Residue 347–361 (DVAVIGGGNSGVEAA) participates in NAD(+) binding. Residue 467 to 477 (TNVPGIFAAGD) coordinates FAD.

This sequence belongs to the class-II pyridine nucleotide-disulfide oxidoreductase family. As to quaternary structure, homodimer. Requires FAD as cofactor.

Its function is as follows. Serves to protect the cell against DNA damage by alkyl hydroperoxides. It can use either NADH or NADPH as electron donor for direct reduction of redox dyes or of alkyl hydroperoxides when combined with the AhpC protein. In Staphylococcus epidermidis (strain ATCC 12228 / FDA PCI 1200), this protein is Alkyl hydroperoxide reductase subunit F (ahpF).